A 201-amino-acid polypeptide reads, in one-letter code: Large ribosomal subunit protein uL4 (201 aa).

Residues arginine 44 to glycine 71 are disordered.

Belongs to the universal ribosomal protein uL4 family. In terms of assembly, part of the 50S ribosomal subunit.

One of the primary rRNA binding proteins, this protein initially binds near the 5'-end of the 23S rRNA. It is important during the early stages of 50S assembly. It makes multiple contacts with different domains of the 23S rRNA in the assembled 50S subunit and ribosome. Its function is as follows. Forms part of the polypeptide exit tunnel. The protein is Large ribosomal subunit protein uL4 of Shigella flexneri serotype 5b (strain 8401).